A 166-amino-acid chain; its full sequence is Small ribosomal subunit protein uS5 (166 aa).

An S5 DRBM domain is found at Leu11 to Val74.

This sequence belongs to the universal ribosomal protein uS5 family. In terms of assembly, part of the 30S ribosomal subunit. Contacts proteins S4 and S8.

Its function is as follows. With S4 and S12 plays an important role in translational accuracy. Functionally, located at the back of the 30S subunit body where it stabilizes the conformation of the head with respect to the body. This is Small ribosomal subunit protein uS5 from Francisella tularensis subsp. holarctica (strain LVS).